Here is a 393-residue protein sequence, read N- to C-terminus: Envelope glycoprotein D (393 aa).

The signal sequence occupies residues 1–25 (MGRLTSGVGTAALLVVAVGLRVVCA). Residues 25-57 (AKYALADPSLKMADPNRFRGKNLPVLDQLTDPP) are interaction with TNFRSF14. Topologically, residues 26-340 (KYALADPSLK…HAPAAPSNPG (315 aa)) are virion surface. His64 is a binding site for Zn(2+). 3 disulfides stabilise this stretch: Cys91/Cys214, Cys131/Cys227, and Cys143/Cys152. Residues Asn119 and Asn146 are each glycosylated (N-linked (GlcNAc...) asparagine; by host). Position 240 (Asp240) interacts with Zn(2+). Residues 261-305 (LKIAGWHGPKPPYTSTLLPPELSDTTNATQPELVPEDPEDSALLE) form a profusion region. Residues 274 to 290 (TSTLLPPELSDTTNATQ) are compositionally biased toward polar residues. Residues 274-301 (TSTLLPPELSDTTNATQPELVPEDPEDS) are disordered. Asn287 carries N-linked (GlcNAc...) asparagine; by host glycosylation. Residues 341-361 (LIIGALAGSTLAVLVIGGIAF) traverse the membrane as a helical segment. At 362-393 (WVRRRAQMAPKRLRLPHIRDDDAPPSHQPLFY) the chain is on the intravirion side.

This sequence belongs to the herpesviridae glycoprotein D family. As to quaternary structure, homodimer. Interacts with host receptor TNFRSF14. Interacts with host receptor NECTIN1. Interacts with host receptor NECTIN2. Interacts (via profusion domain) with gB; this interaction occurs in the absence of gH/gL. Interacts (via profusion domain) with gH/gL heterodimer; this interaction occurs in the absence of gB. Associates with the gB-gH/gL-gD complex. Interacts (via C-terminus) with UL11 tegument protein.

It is found in the virion membrane. Envelope glycoprotein that binds to the host cell entry receptors NECTIN1 and TNFRSF14/HVEM, promoting the virus entry into host cells. May trigger fusion with host membrane, by recruiting the fusion machinery composed of gB and gH/gL. The protein is Envelope glycoprotein D (gD) of Human herpesvirus 2 (strain HG52) (HHV-2).